We begin with the raw amino-acid sequence, 364 residues long: Palmitoyltransferase ZDHHC9 (364 aa).

The Cytoplasmic portion of the chain corresponds to 1–35; sequence MSVMVVRKKVTRKWEKLPGRNTFCCDGRVMMARQK. The helical transmembrane segment at 36–56 threads the bilayer; it reads GIFYLTLFLILGTCTLFFAFE. The Lumenal segment spans residues 57 to 63; that stretch reads CRYLAVQ. A helical membrane pass occupies residues 64–84; the sequence is LSPAIPVFAAMLFLFSMATLL. The Cytoplasmic portion of the chain corresponds to 85-183; the sequence is RTSFSDPGVI…NCVGKRNYRY (99 aa). Residues 139 to 189 form the DHHC domain; it reads KYCYTCKIFRPPRASHCSICDNCVERFDHHCPWVGNCVGKRNYRYFYLFIL. The S-palmitoyl cysteine intermediate role is filled by Cys169. Residues 184–204 form a helical membrane-spanning segment; sequence FYLFILSLSLLTIYVFAFNIV. Topologically, residues 205-228 are lumenal; the sequence is YVALKSLKIGFLETLKETPGTVLE. The helical transmembrane segment at 229–249 threads the bilayer; the sequence is VLICFFTLWSVVGLTGFHTFL. The Cytoplasmic portion of the chain corresponds to 250 to 364; sequence VALNQTTNED…PPQEAAEAEK (115 aa). Positions 303–364 are disordered; that stretch reads PLEESGSRPP…PPQEAAEAEK (62 aa). Positions 310–323 are enriched in polar residues; the sequence is RPPSTQETSSSLLP. Pro residues predominate over residues 346–356; the sequence is EMPPPEPPEPP.

This sequence belongs to the DHHC palmitoyltransferase family. ERF2/ZDHHC9 subfamily. In terms of assembly, interacts with GOLGA7. Highly expressed in kidney, skeletal muscle, brain, lung and liver. Absent in thymus, spleen and leukocytes.

It localises to the endoplasmic reticulum membrane. The protein localises to the golgi apparatus membrane. The catalysed reaction is L-cysteinyl-[protein] + hexadecanoyl-CoA = S-hexadecanoyl-L-cysteinyl-[protein] + CoA. In terms of biological role, palmitoyltransferase that catalyzes the addition of palmitate onto various protein substrates, such as ADRB2, GSDMD, HRAS, NRAS and CGAS. The ZDHHC9-GOLGA7 complex is a palmitoyltransferase specific for HRAS and NRAS. May have a palmitoyltransferase activity toward the beta-2 adrenergic receptor/ADRB2 and therefore regulate G protein-coupled receptor signaling. Acts as a regulator of innate immunity by catalyzing palmitoylation of CGAS, thereby promoting CGAS homodimerization and cyclic GMP-AMP synthase activity. Activates pyroptosis by catalyzing palmitoylation of gasdermin-D (GSDMD), thereby promoting membrane translocation and pore formation of GSDMD. Functionally, (Microbial infection) Through a sequential action with ZDHHC20, rapidly and efficiently palmitoylates SARS coronavirus-2/SARS-CoV-2 spike protein following its synthesis in the endoplasmic reticulum (ER). In the infected cell, promotes spike biogenesis by protecting it from premature ER degradation, increases half-life and controls the lipid organization of its immediate membrane environment. Once the virus has formed, spike palmitoylation controls fusion with the target cell. The protein is Palmitoyltransferase ZDHHC9 of Homo sapiens (Human).